A 74-amino-acid chain; its full sequence is Conotoxin ArMKLT2-041 (74 aa).

The first 22 residues, 1 to 22 (MKLTCVLIVAVLFLTACQLIAA), serve as a signal peptide directing secretion. A propeptide spanning residues 23–46 (DDSRDLQKFPRRKMRDGMLNTKNT) is cleaved from the precursor. Gln49 bears the Pyrrolidone carboxylic acid mark. Disulfide bonds link Cys50-Cys65, Cys57-Cys68, and Cys64-Cys73.

It belongs to the conotoxin O1 superfamily. In terms of tissue distribution, expressed by the venom duct.

It localises to the secreted. This is Conotoxin ArMKLT2-041 from Conus arenatus (Sand-dusted cone).